Reading from the N-terminus, the 218-residue chain is ER lumen protein-retaining receptor (218 aa).

Topologically, residues 1–2 (MN) are lumenal. The chain crosses the membrane as a helical span at residues 3–23 (LFSFLGDMLHLGSMLILLFKI). The Cytoplasmic segment spans residues 24–57 (KNDKSCAGVSLKSQILFTIVFTARYLDLFTNYVS). The helical transmembrane segment at 58–78 (LYITFMKITYIAVSYYTLHLI) threads the bilayer. Residues 79–94 (ARKYKFTYDKDHDTFK) lie on the Lumenal side of the membrane. A helical membrane pass occupies residues 95-115 (IVYLIASCAILSLITYDKTTI). Topologically, residues 116-123 (GIYSTFLE) are cytoplasmic. Residues 124-144 (ILWTFSIYLESIAILPQLILL) traverse the membrane as a helical segment. Residues 145-152 (QRTGEVEA) lie on the Lumenal side of the membrane. A helical membrane pass occupies residues 153-173 (LTSNYIVLLGGYRAFYLFNWI). Over 174-184 (YRITFYNWSGK) the chain is Cytoplasmic. Residues 185-205 (IEMLSGLLQTILYADFFYYYA) form a helical membrane-spanning segment. Residues 206 to 218 (KSRMYGKKLVLPQ) lie on the Lumenal side of the membrane.

It belongs to the ERD2 family.

Its subcellular location is the endoplasmic reticulum membrane. Its function is as follows. Required for the retention of luminal endoplasmic reticulum proteins. Determines the specificity of the luminal ER protein retention system. Also required for normal vesicular traffic through the Golgi. This is ER lumen protein-retaining receptor (kdelr) from Dictyostelium discoideum (Social amoeba).